We begin with the raw amino-acid sequence, 294 residues long: Oligopeptide transport system permease protein OppC (294 aa).

The next 6 membrane-spanning stretches (helical) occupy residues 27–47 (MIST…SMFL), 94–114 (IAFA…VITG), 127–147 (FTDF…VTII), 151–171 (NSWS…TRLI), 202–224 (IWPN…NIGL), and 260–280 (WTWV…IFIG). The ABC transmembrane type-1 domain occupies 88-280 (ARNSFNIAFA…IVVLAIIFIG (193 aa)).

This sequence belongs to the binding-protein-dependent transport system permease family. OppBC subfamily. The complex is composed of two ATP-binding proteins (OppD and OppF), two transmembrane proteins (OppB and OppC) and a solute-binding protein (OppA).

It localises to the cell membrane. Functionally, part of the ABC transporter complex OppABCDF involved in the uptake of oligopeptides. Probably responsible for the translocation of the substrate across the membrane. In Lactococcus lactis subsp. cremoris (strain SK11), this protein is Oligopeptide transport system permease protein OppC.